Consider the following 117-residue polypeptide: uncharacterized protein (117 aa).

4 helical membrane-spanning segments follow: residues 3–23 (AVPIILVFAAGLNSCIGNILL), 40–60 (FLTPGFVGGVVFYGINVLLFA), 66–86 (LEVSVAYPILAGSGFAMLIIA), and 94–114 (PFHLHKWIGVALVLVGIIFLA).

It to E.coli and S.aureus ethidium bromide resistance proteins (ebr/QacC/EmrE/MvrC).

The protein resides in the cell membrane. This is an uncharacterized protein from Sinorhizobium fredii (strain NBRC 101917 / NGR234).